A 717-amino-acid chain; its full sequence is Acetone carboxylase beta subunit (717 aa).

In terms of assembly, heterohexamer of two alpha, two beta and two gamma subunits. Requires Fe cation as cofactor. Mg(2+) is required as a cofactor. It depends on Zn(2+) as a cofactor. In terms of processing, the N-terminus is blocked.

It catalyses the reaction acetone + hydrogencarbonate + 2 ATP + 3 H2O = acetoacetate + 2 AMP + 4 phosphate + 4 H(+). Its function is as follows. Catalyzes the carboxylation of acetone to form acetoacetate. Has a reduced activity on butanone, and no activity on 2-pentatone, 3-pentatone, 2-hexanone, chloroacetone, pyruvate, phosphoenolpyruvate, acetaldehyde, propionaldehyde and propylene oxide. This is Acetone carboxylase beta subunit from Xanthobacter autotrophicus (strain ATCC BAA-1158 / Py2).